A 263-amino-acid polypeptide reads, in one-letter code: MVTMRDLLECGVHFGHQTRRWNPKMKRFIFGERKGIYIIDLQKTIRYFRYTYNIVRDAAAEGKTILFVGTKKQAVEAIKEYAEKCGMPYVNHRWLGGMMTNFGTIRQSIRKLEVIETMEEDGSINLLTKKEALMLRRKKEKLIATLGGIRNMKNLPDMVFIVDTVKEKIAVQEANRLKMPVVAPIDTNCDPDVVDYPIPGNDDAIRSVQLFCQEMAEAINEGKSLLEQDSDANADEAEVSQEEKDAVVAEAMSEEDFASEDDE.

The interval lysine 223–alanine 246 is disordered. Over residues glutamine 228–serine 240 the composition is skewed to acidic residues.

It belongs to the universal ribosomal protein uS2 family.

This is Small ribosomal subunit protein uS2 from Campylobacter curvus (strain 525.92).